We begin with the raw amino-acid sequence, 395 residues long: MMSIQRAAQINRQFDYMSIKELWMAKFPLHKPGDCLDMFKNGDYTGPTMGCIQKTKASKKNTIFHIKSDFNSTEYDEPPISGFKMFTQHCCQRIDEHFCGALHPVISNIEFEHNQLKTRPQVASELNLFIPCGIKNLKIESGEKSTWIVGTKFRKCMCLKPVIVAATIIGTPINKNLITFCSSDYIQVIVNRNREGSCGICMGNVSTYEACGNWTNETWGEEFSLDLKLCYKCTPVAFIFSLMMSTGHKPYVSKKQFEENRRKWERVLNYKICKENLDSHLACANHENVYKSIKKYEFFDSVWVYHLANSSWVRDLTRECIESNPGPNYIQLLNEHSQRYGFVQPTYEIIAVVSDGHHSYQCTCYYKDMKTQSTGPSKKNAKHQAAEQMFRHQCF.

Positions 328–395 (NYIQLLNEHS…AEQMFRHQCF (68 aa)) constitute a DRBM domain.

This is Non-structural protein 1 from Homo sapiens (Human).